Here is an 83-residue protein sequence, read N- to C-terminus: Keratin-associated protein 21-2 (83 aa).

Interacts with hair keratins.

Its function is as follows. In the hair cortex, hair keratin intermediate filaments are embedded in an interfilamentous matrix, consisting of hair keratin-associated proteins (KRTAP), which are essential for the formation of a rigid and resistant hair shaft through their extensive disulfide bond cross-linking with abundant cysteine residues of hair keratins. The matrix proteins include the high-sulfur and high-glycine-tyrosine keratins. The polypeptide is Keratin-associated protein 21-2 (KRTAP21-2) (Homo sapiens (Human)).